We begin with the raw amino-acid sequence, 230 residues long: Orotidine 5'-phosphate decarboxylase (230 aa).

Residues Asp-10, Lys-31, 58 to 67 (DLKLHDIPNT), Thr-117, Arg-179, Gln-188, Gly-208, and Arg-209 each bind substrate. Lys-60 (proton donor) is an active-site residue. Residues 177-196 (GIRPKDASSDDQKRITTPED) are disordered. The span at 179 to 196 (RPKDASSDDQKRITTPED) shows a compositional bias: basic and acidic residues.

Belongs to the OMP decarboxylase family. Type 1 subfamily. Homodimer.

It catalyses the reaction orotidine 5'-phosphate + H(+) = UMP + CO2. It participates in pyrimidine metabolism; UMP biosynthesis via de novo pathway; UMP from orotate: step 2/2. In terms of biological role, catalyzes the decarboxylation of orotidine 5'-monophosphate (OMP) to uridine 5'-monophosphate (UMP). In Staphylococcus saprophyticus subsp. saprophyticus (strain ATCC 15305 / DSM 20229 / NCIMB 8711 / NCTC 7292 / S-41), this protein is Orotidine 5'-phosphate decarboxylase.